Here is a 512-residue protein sequence, read N- to C-terminus: ATP synthase subunit alpha (512 aa).

169–176 (GDRQTGKT) contributes to the ATP binding site.

The protein belongs to the ATPase alpha/beta chains family. In terms of assembly, F-type ATPases have 2 components, CF(1) - the catalytic core - and CF(0) - the membrane proton channel. CF(1) has five subunits: alpha(3), beta(3), gamma(1), delta(1), epsilon(1). CF(0) has three main subunits: a(1), b(2) and c(9-12). The alpha and beta chains form an alternating ring which encloses part of the gamma chain. CF(1) is attached to CF(0) by a central stalk formed by the gamma and epsilon chains, while a peripheral stalk is formed by the delta and b chains.

The protein localises to the cell inner membrane. It catalyses the reaction ATP + H2O + 4 H(+)(in) = ADP + phosphate + 5 H(+)(out). Its function is as follows. Produces ATP from ADP in the presence of a proton gradient across the membrane. The alpha chain is a regulatory subunit. This chain is ATP synthase subunit alpha, found in Rickettsia akari (strain Hartford).